The primary structure comprises 780 residues: ATP-dependent 6-phosphofructokinase, liver type (780 aa).

Position 2 is an N-acetylalanine (A2). Residues A2–H390 form an N-terminal catalytic PFK domain 1 region. Residues G25, R88–C89, and G118–S121 contribute to the ATP site. D119 provides a ligand contact to Mg(2+). Substrate contacts are provided by residues S164–D166, R201, M208–R210, E264, R292, and H298–R301. D166 acts as the Proton acceptor in catalysis. A Phosphoserine modification is found at S377. Residues Q391–F400 form an interdomain linker region. The interval S401–F780 is C-terminal regulatory PFK domain 2. Residues R470, T527–N531, R565, M572–G574, and E628 contribute to the beta-D-fructose 2,6-bisphosphate site. Residue S529 is glycosylated (O-linked (GlcNAc) serine). At Y640 the chain carries Phosphotyrosine. Beta-D-fructose 2,6-bisphosphate is bound by residues R654, H660–Q663, and R734. S775 is subject to Phosphoserine.

The protein belongs to the phosphofructokinase type A (PFKA) family. ATP-dependent PFK group I subfamily. Eukaryotic two domain clade 'E' sub-subfamily. As to quaternary structure, homo- and heterotetramers. Phosphofructokinase (PFK) enzyme functions as a tetramer composed of different combinations of 3 types of subunits, called PFKM (M), PFKL (L) and PFKP (P). The composition of the PFK tetramer differs according to the tissue type it is present in. The kinetic and regulatory properties of the tetrameric enzyme are dependent on the subunit composition, hence can vary across tissues. Requires Mg(2+) as cofactor. In terms of processing, glcNAcylation at Ser-529 by OGT decreases enzyme activity, leading to redirect glucose flux through the oxidative pentose phosphate pathway. Glycosylation is stimulated by both hypoxia and glucose deprivation.

It localises to the cytoplasm. The catalysed reaction is beta-D-fructose 6-phosphate + ATP = beta-D-fructose 1,6-bisphosphate + ADP + H(+). The protein operates within carbohydrate degradation; glycolysis; D-glyceraldehyde 3-phosphate and glycerone phosphate from D-glucose: step 3/4. With respect to regulation, allosterically activated by ADP, AMP, or fructose 2,6-bisphosphate, and allosterically inhibited by ATP or citrate. GlcNAcylation by OGT overcomes allosteric regulation. Functionally, catalyzes the phosphorylation of D-fructose 6-phosphate to fructose 1,6-bisphosphate by ATP, the first committing step of glycolysis. Negatively regulates the phagocyte oxidative burst in response to bacterial infection by controlling cellular NADPH biosynthesis and NADPH oxidase-derived reactive oxygen species. Upon macrophage activation, drives the metabolic switch toward glycolysis, thus preventing glucose turnover that produces NADPH via pentose phosphate pathway. The chain is ATP-dependent 6-phosphofructokinase, liver type (Pfkl) from Rattus norvegicus (Rat).